We begin with the raw amino-acid sequence, 222 residues long: 26S proteasome non-ATPase regulatory subunit 9 (222 aa).

In terms of domain architecture, PDZ spans 108-194 (QARDMAEARE…KPLNVTVIRR (87 aa)). A Phosphoserine modification is found at Ser-128.

The protein belongs to the proteasome subunit p27 family. In terms of assembly, interacts with PSMC3. Part of a transient complex (modulator) containing PSMD9, PSMC6 and PSMC3 formed during the assembly of the 26S proteasome.

Its function is as follows. Acts as a chaperone during the assembly of the 26S proteasome, specifically of the base subcomplex of the PA700/19S regulatory complex (RC). During the base subcomplex assembly is part of an intermediate PSMD9:PSMC6:PSMC3 module, also known as modulator trimer complex; PSMD9 is released during the further base assembly process. This Mus musculus (Mouse) protein is 26S proteasome non-ATPase regulatory subunit 9 (Psmd9).